Consider the following 279-residue polypeptide: 1-(5-phosphoribosyl)-5-[(5-phosphoribosylamino)methylideneamino] imidazole-4-carboxamide isomerase (279 aa).

Belongs to the HisA/HisF family.

The protein localises to the cytoplasm. It catalyses the reaction 1-(5-phospho-beta-D-ribosyl)-5-[(5-phospho-beta-D-ribosylamino)methylideneamino]imidazole-4-carboxamide = 5-[(5-phospho-1-deoxy-D-ribulos-1-ylimino)methylamino]-1-(5-phospho-beta-D-ribosyl)imidazole-4-carboxamide. The protein operates within amino-acid biosynthesis; L-histidine biosynthesis; L-histidine from 5-phospho-alpha-D-ribose 1-diphosphate: step 4/9. The sequence is that of 1-(5-phosphoribosyl)-5-[(5-phosphoribosylamino)methylideneamino] imidazole-4-carboxamide isomerase (HIS6) from Candida albicans (Yeast).